A 275-amino-acid polypeptide reads, in one-letter code: Phosphite import ATP-binding protein PxtA (275 aa).

Residues 11–252 enclose the ABC transporter domain; sequence LRVDRLSVVY…QLERIYAGRS (242 aa). 44 to 51 is a binding site for ATP; that stretch reads GLSGAGKS. The segment at 251–275 is disordered; sequence RSTTQPANAPAEPPVMLEPSLEMSR.

Belongs to the ABC transporter superfamily. Phosphonates importer (TC 3.A.1.9.1) family. In terms of assembly, the complex is composed of two ATP-binding proteins (PtxA), two transmembrane proteins (PtxC) and a solute-binding protein (PtxB).

It localises to the cell inner membrane. The catalysed reaction is phosphite(out) + ATP + H2O = phosphite(in) + ADP + phosphate + H(+). Functionally, part of the ABC transporter complex PtxABC involved in phosphite import. Responsible for energy coupling to the transport system. This is Phosphite import ATP-binding protein PxtA (ptxA) from Stutzerimonas stutzeri (Pseudomonas stutzeri).